A 118-amino-acid polypeptide reads, in one-letter code: Small ribosomal subunit protein uS12cz/uS12cy (118 aa).

It belongs to the universal ribosomal protein uS12 family. As to quaternary structure, part of the 30S ribosomal subunit.

The protein localises to the plastid. Its subcellular location is the chloroplast. With S4 and S5 plays an important role in translational accuracy. Located at the interface of the 30S and 50S subunits. The chain is Small ribosomal subunit protein uS12cz/uS12cy (rps12-A) from Helianthus annuus (Common sunflower).